The chain runs to 426 residues: Cuticle-degrading serine protease (426 aa).

A signal peptide spans 1–21 (MLTNGLISLLAIAGLATNAFA). A propeptide spanning residues 22 to 123 (GPIRKVSNAG…VEQDTVVTTY (102 aa)) is cleaved from the precursor. An Inhibitor I9 domain is found at 39–122 (KYIVVLKKGL…YVEQDTVVTT (84 aa)). The Peptidase S8 domain occupies 130–426 (TWGLDRISHE…TNHQVTIVAS (297 aa)). The active-site Charge relay system is the Asp164. A glycan (N-linked (GlcNAc...) asparagine) is linked at Asn178. Residue His200 is the Charge relay system of the active site. N-linked (GlcNAc...) asparagine glycosylation occurs at Asn252. Ser353 serves as the catalytic Charge relay system.

This sequence belongs to the peptidase S8 family.

It localises to the secreted. Inhibited by PMSF, SSI, the peptide Phe-Val and by Phe, but not by EDTA. Hydrolyzes gelatin, casein, the chromogenic substrate azocoll and the cuticle of the nematode P.redivivus. Immobilizes P.redivivus. The protein is Cuticle-degrading serine protease of Orbilia oligospora (Nematode-trapping fungus).